The chain runs to 858 residues: Low-density lipoprotein receptor-related protein 12 (858 aa).

The first 32 residues, 1–32, serve as a signal peptide directing secretion; that stretch reads MARRWSTKESQRRGSAWLLLFLAGVYGNGALA. Over 33-492 the chain is Extracellular; the sequence is ELSENVHISG…ENCPVIVPTR (460 aa). Intrachain disulfides connect Cys47–Cys76, Cys103–Cys122, Cys166–Cys178, Cys173–Cys191, Cys185–Cys200, Cys215–Cys232, Cys222–Cys245, Cys239–Cys254, and Cys259–Cys285. The region spanning 47–159 is the CUB 1 domain; sequence CGESPEQIRA…KGFRLAYFSG (113 aa). Asn75 is a glycosylation site (N-linked (GlcNAc...) asparagine). LDL-receptor class A domains are found at residues 165-201 and 214-255; these read DCACDQFRCGNGKCIPEAWKCNSMDECGDSSDEEVCA and PCAY…IDCD. One can recognise a CUB 2 domain in the interval 259-372; the sequence is CGQWLKYFYG…RGFNATYQVD (114 aa). N-linked (GlcNAc...) asparagine glycosylation is found at Asn284 and Asn366. LDL-receptor class A domains lie at 374–411, 412–449, and 450–486; these read FCLPWEIPCGGNWGCYTEQQRCDGYWHCPNGRDEINCT, MCQKEEFPCSRNGVCYPRSDRCNYQNHCPNGSDEKNCF, and FCQPGNFHCKNNRCVFESWVCDSQDDCGDGSDEENCP. Intrachain disulfides connect Cys375-Cys388, Cys382-Cys401, Cys395-Cys410, Cys413-Cys426, Cys420-Cys439, Cys433-Cys448, Cys451-Cys463, Cys458-Cys476, and Cys470-Cys485. Asn409 carries N-linked (GlcNAc...) asparagine glycosylation. A glycan (N-linked (GlcNAc...) asparagine) is linked at Asn441. The chain crosses the membrane as a helical span at residues 493–513; sequence VITAAVIGSLICGLLLVIALG. Over 514–858 the chain is Cytoplasmic; the sequence is CTCKLYSLRM…TSDDEALLLC (345 aa). Disordered regions lie at residues 619–721 and 746–767; these read ALVS…VSPA and SSSTTQNRSPLRQLDTAVSGRE. Residues 712-721 show a composition bias toward low complexity; the sequence is SVEAPSVSPA. The segment covering 746–755 has biased composition (polar residues); it reads SSSTTQNRSP.

It belongs to the LDLR family. As to quaternary structure, may interact with RACK1, ZFYVE9 and NMRK2.

It is found in the membrane. Its subcellular location is the coated pit. Its function is as follows. Probable receptor, which may be involved in the internalization of lipophilic molecules and/or signal transduction. May act as a tumor suppressor. The protein is Low-density lipoprotein receptor-related protein 12 (Lrp12) of Mus musculus (Mouse).